A 101-amino-acid polypeptide reads, in one-letter code: CRISPR-associated endoribonuclease Cas2 (101 aa).

D8 is a binding site for Mg(2+).

It belongs to the CRISPR-associated endoribonuclease Cas2 protein family. Homodimer, forms a heterotetramer with a Cas1 homodimer. It depends on Mg(2+) as a cofactor.

CRISPR (clustered regularly interspaced short palindromic repeat), is an adaptive immune system that provides protection against mobile genetic elements (viruses, transposable elements and conjugative plasmids). CRISPR clusters contain sequences complementary to antecedent mobile elements and target invading nucleic acids. CRISPR clusters are transcribed and processed into CRISPR RNA (crRNA). Functions as a ssRNA-specific endoribonuclease. Involved in the integration of spacer DNA into the CRISPR cassette. The protein is CRISPR-associated endoribonuclease Cas2 of Ligilactobacillus salivarius (strain UCC118) (Lactobacillus salivarius).